The chain runs to 335 residues: Ketol-acid reductoisomerase (NADP(+)) (335 aa).

Positions M1–T182 constitute a KARI N-terminal Rossmann domain. NADP(+) contacts are provided by residues Y25 to Q28, R48, S51, S53, and D83 to Q86. H108 is a catalytic residue. Residue G134 participates in NADP(+) binding. In terms of domain architecture, KARI C-terminal knotted spans T183–L328. Positions 191, 195, 227, and 231 each coordinate Mg(2+). Residue S252 coordinates substrate.

The protein belongs to the ketol-acid reductoisomerase family. Mg(2+) serves as cofactor.

It catalyses the reaction (2R)-2,3-dihydroxy-3-methylbutanoate + NADP(+) = (2S)-2-acetolactate + NADPH + H(+). The enzyme catalyses (2R,3R)-2,3-dihydroxy-3-methylpentanoate + NADP(+) = (S)-2-ethyl-2-hydroxy-3-oxobutanoate + NADPH + H(+). It functions in the pathway amino-acid biosynthesis; L-isoleucine biosynthesis; L-isoleucine from 2-oxobutanoate: step 2/4. The protein operates within amino-acid biosynthesis; L-valine biosynthesis; L-valine from pyruvate: step 2/4. Functionally, involved in the biosynthesis of branched-chain amino acids (BCAA). Catalyzes an alkyl-migration followed by a ketol-acid reduction of (S)-2-acetolactate (S2AL) to yield (R)-2,3-dihydroxy-isovalerate. In the isomerase reaction, S2AL is rearranged via a Mg-dependent methyl migration to produce 3-hydroxy-3-methyl-2-ketobutyrate (HMKB). In the reductase reaction, this 2-ketoacid undergoes a metal-dependent reduction by NADPH to yield (R)-2,3-dihydroxy-isovalerate. The chain is Ketol-acid reductoisomerase (NADP(+)) from Methanosarcina acetivorans (strain ATCC 35395 / DSM 2834 / JCM 12185 / C2A).